Here is a 423-residue protein sequence, read N- to C-terminus: MLDLKLIRQEPDFIKEKLATRGVDPADIDALLELDAKRRELIVKSETMKAQRNTVSDEISQLKRNKEDADDKIKEMRQVSADIKDIDAQLDTLKDQVQDAAAHLPNIPNDNVPVGLTEDGSVELRQWGEKPNMDFTPKAHYEIGEDLGILDFEAGAKVSGSRYLYYLGAGARLERAVYNFFLDENTKAGFKEVLPPYIVNDDSMYGTGQFPKFKEDVYQLKDEAMTLIPTAEVPLVNYYRDEVIPEEELPVWFTALTPAFRSEAGSAGRDTRGLIRLHQFNKVEMVKFCKPENSWAELEALTKHAESLLQKLGLAYHVITLTTSDMSFTAAMTHDLEVWFPEQQTYREISSCSNTTDFQARRAHIQYRDENGKLQYVHALNGSGLAVGRAVAAILENYQNADGSVTIPDVLVPYMGGLTKITK.

T230–E232 provides a ligand contact to L-serine. R261–E263 is a binding site for ATP. Residue E284 participates in L-serine binding. Position 348-351 (E348–S351) interacts with ATP. An L-serine-binding site is contributed by S383.

Belongs to the class-II aminoacyl-tRNA synthetase family. Type-1 seryl-tRNA synthetase subfamily. Homodimer. The tRNA molecule binds across the dimer.

It is found in the cytoplasm. It catalyses the reaction tRNA(Ser) + L-serine + ATP = L-seryl-tRNA(Ser) + AMP + diphosphate + H(+). The catalysed reaction is tRNA(Sec) + L-serine + ATP = L-seryl-tRNA(Sec) + AMP + diphosphate + H(+). It functions in the pathway aminoacyl-tRNA biosynthesis; selenocysteinyl-tRNA(Sec) biosynthesis; L-seryl-tRNA(Sec) from L-serine and tRNA(Sec): step 1/1. Functionally, catalyzes the attachment of serine to tRNA(Ser). Is also able to aminoacylate tRNA(Sec) with serine, to form the misacylated tRNA L-seryl-tRNA(Sec), which will be further converted into selenocysteinyl-tRNA(Sec). This chain is Serine--tRNA ligase, found in Levilactobacillus brevis (strain ATCC 367 / BCRC 12310 / CIP 105137 / JCM 1170 / LMG 11437 / NCIMB 947 / NCTC 947) (Lactobacillus brevis).